The sequence spans 116 residues: Peptidyl-tRNA hydrolase (116 aa).

The protein belongs to the PTH2 family.

The protein resides in the cytoplasm. The enzyme catalyses an N-acyl-L-alpha-aminoacyl-tRNA + H2O = an N-acyl-L-amino acid + a tRNA + H(+). The natural substrate for this enzyme may be peptidyl-tRNAs which drop off the ribosome during protein synthesis. The chain is Peptidyl-tRNA hydrolase (pth) from Methanococcus maripaludis (strain DSM 14266 / JCM 13030 / NBRC 101832 / S2 / LL).